The following is a 104-amino-acid chain: MAAKIRRDDEVIVLTGKDKGKRGKVKNVLSSGKAIVEGINLIKKHQKPVPAMNQPGGIVEKEAAIDLSNLAIFNAAASKADRVGFKIEDGKKVRVFKSNGETIK.

The protein belongs to the universal ribosomal protein uL24 family. In terms of assembly, part of the 50S ribosomal subunit.

In terms of biological role, one of two assembly initiator proteins, it binds directly to the 5'-end of the 23S rRNA, where it nucleates assembly of the 50S subunit. Its function is as follows. One of the proteins that surrounds the polypeptide exit tunnel on the outside of the subunit. In Sodalis glossinidius (strain morsitans), this protein is Large ribosomal subunit protein uL24.